Here is a 257-residue protein sequence, read N- to C-terminus: Small ribosomal subunit protein uS15m (257 aa).

The transit peptide at 1-57 (MLRVAWRTLSLIRTRAVTQVLVPGLPGGGSAKFPFNQWGLQPRSLLLQAARGYVVRK) directs the protein to the mitochondrion. The interval 225–257 (RALKAAAAAQKQAKRRNPDSPAKAIPKTLKDSQ) is disordered.

Belongs to the universal ribosomal protein uS15 family. In terms of assembly, component of the mitochondrial small ribosomal subunit (mt-SSU). Mature mammalian 55S mitochondrial ribosomes consist of a small (28S) and a large (39S) subunit. The 28S small subunit contains a 12S ribosomal RNA (12S mt-rRNA) and 30 different proteins. The 39S large subunit contains a 16S rRNA (16S mt-rRNA), a copy of mitochondrial valine transfer RNA (mt-tRNA(Val)), which plays an integral structural role, and 52 different proteins. Interacts with METTL17.

Its subcellular location is the mitochondrion matrix. This Homo sapiens (Human) protein is Small ribosomal subunit protein uS15m (MRPS15).